A 415-amino-acid chain; its full sequence is Serine hydroxymethyltransferase (415 aa).

Residues Leu120 and 124 to 126 (GHL) contribute to the (6S)-5,6,7,8-tetrahydrofolate site. At Lys229 the chain carries N6-(pyridoxal phosphate)lysine.

The protein belongs to the SHMT family. As to quaternary structure, homodimer. It depends on pyridoxal 5'-phosphate as a cofactor.

The protein localises to the cytoplasm. The enzyme catalyses (6R)-5,10-methylene-5,6,7,8-tetrahydrofolate + glycine + H2O = (6S)-5,6,7,8-tetrahydrofolate + L-serine. It participates in one-carbon metabolism; tetrahydrofolate interconversion. It functions in the pathway amino-acid biosynthesis; glycine biosynthesis; glycine from L-serine: step 1/1. Its function is as follows. Catalyzes the reversible interconversion of serine and glycine with tetrahydrofolate (THF) serving as the one-carbon carrier. This reaction serves as the major source of one-carbon groups required for the biosynthesis of purines, thymidylate, methionine, and other important biomolecules. Also exhibits THF-independent aldolase activity toward beta-hydroxyamino acids, producing glycine and aldehydes, via a retro-aldol mechanism. This Pelotomaculum thermopropionicum (strain DSM 13744 / JCM 10971 / SI) protein is Serine hydroxymethyltransferase.